The chain runs to 202 residues: GPI-anchored hemophore cfmB (202 aa).

An N-terminal signal peptide occupies residues 1–18 (MHFSRTSLILFAAGLASA). In terms of domain architecture, CFEM spans 19–108 (QLPNVPGCSL…STTASETATT (90 aa)). 4 disulfides stabilise this stretch: C26–C67, C30–C62, C40–C48, and C50–C83. Heme is bound at residue D45. A disordered region spans residues 94 to 171 (PVGAASTTAS…PSSQSTSASA (78 aa)). A compositionally biased stretch (low complexity) spans 97-171 (AASTTASETA…PSSQSTSASA (75 aa)). A lipid anchor (GPI-anchor amidated asparagine) is attached at N180. Positions 181-202 (AGSEKANVAGVVAVAAAALYLL) are cleaved as a propeptide — removed in mature form.

It belongs to the RBT5 family. In terms of processing, the GPI-anchor is attached to the protein in the endoplasmic reticulum and serves to target the protein to the cell surface. There, the glucosamine-inositol phospholipid moiety is cleaved off and the GPI-modified mannoprotein is covalently attached via its lipidless GPI glycan remnant to the 1,6-beta-glucan of the outer cell wall layer.

Its subcellular location is the secreted. It localises to the cell wall. It is found in the cell membrane. Functionally, GPI-anchored cell wall protein involved in stabilizing the cell wall. Not implicated in virulence, heme uptake and biofilm formation. The polypeptide is GPI-anchored hemophore cfmB (Aspergillus fumigatus (strain ATCC MYA-4609 / CBS 101355 / FGSC A1100 / Af293) (Neosartorya fumigata)).